Reading from the N-terminus, the 518-residue chain is Serine incorporator 4 (518 aa).

The next 10 membrane-spanning stretches (helical) occupy residues 59 to 79, 122 to 142, 153 to 173, 184 to 204, 222 to 242, 259 to 279, 286 to 306, 338 to 357, 427 to 447, and 470 to 490; these read CSRL…CLLL, VCAG…HLHS, SFWL…FCIP, IGIC…TAFA, FLAV…GAVL, LLSL…APCI, SGLL…FSAL, ISLA…FACN, AFHF…TNWF, and VASC…PLCW.

It belongs to the TDE1 family.

It is found in the membrane. Functionally, incorporates a polar amino acid serine into membranes and facilitates the synthesis of two serine-derived lipids, phosphatidylserine and sphingolipids. The sequence is that of Serine incorporator 4 (SERINC4) from Homo sapiens (Human).